An 873-amino-acid chain; its full sequence is Bifunctional uridylyltransferase/uridylyl-removing enzyme (873 aa).

The segment at 1–332 (MAFQSPLTFN…NGGETEPAVI (332 aa)) is uridylyltransferase. The tract at residues 333–692 (INEDFQRRGR…MSKKATRGGT (360 aa)) is uridylyl-removing. The region spanning 451-573 (VDEHSVRLLN…VRDEERLEYL (123 aa)) is the HD domain. 2 consecutive ACT domains span residues 693-773 (EVFV…VKTR) and 800-873 (LMEL…ELAP).

This sequence belongs to the GlnD family. Requires Mg(2+) as cofactor.

The enzyme catalyses [protein-PII]-L-tyrosine + UTP = [protein-PII]-uridylyl-L-tyrosine + diphosphate. It catalyses the reaction [protein-PII]-uridylyl-L-tyrosine + H2O = [protein-PII]-L-tyrosine + UMP + H(+). Its activity is regulated as follows. Uridylyltransferase (UTase) activity is inhibited by glutamine, while glutamine activates uridylyl-removing (UR) activity. Its function is as follows. Modifies, by uridylylation and deuridylylation, the PII regulatory proteins (GlnB and homologs), in response to the nitrogen status of the cell that GlnD senses through the glutamine level. Under low glutamine levels, catalyzes the conversion of the PII proteins and UTP to PII-UMP and PPi, while under higher glutamine levels, GlnD hydrolyzes PII-UMP to PII and UMP (deuridylylation). Thus, controls uridylylation state and activity of the PII proteins, and plays an important role in the regulation of nitrogen assimilation and metabolism. The sequence is that of Bifunctional uridylyltransferase/uridylyl-removing enzyme from Vibrio vulnificus (strain YJ016).